The following is a 99-amino-acid chain: Aspartyl/glutamyl-tRNA(Asn/Gln) amidotransferase subunit C (99 aa).

Belongs to the GatC family. As to quaternary structure, heterotrimer of A, B and C subunits.

The catalysed reaction is L-glutamyl-tRNA(Gln) + L-glutamine + ATP + H2O = L-glutaminyl-tRNA(Gln) + L-glutamate + ADP + phosphate + H(+). The enzyme catalyses L-aspartyl-tRNA(Asn) + L-glutamine + ATP + H2O = L-asparaginyl-tRNA(Asn) + L-glutamate + ADP + phosphate + 2 H(+). Functionally, allows the formation of correctly charged Asn-tRNA(Asn) or Gln-tRNA(Gln) through the transamidation of misacylated Asp-tRNA(Asn) or Glu-tRNA(Gln) in organisms which lack either or both of asparaginyl-tRNA or glutaminyl-tRNA synthetases. The reaction takes place in the presence of glutamine and ATP through an activated phospho-Asp-tRNA(Asn) or phospho-Glu-tRNA(Gln). The polypeptide is Aspartyl/glutamyl-tRNA(Asn/Gln) amidotransferase subunit C (Kineococcus radiotolerans (strain ATCC BAA-149 / DSM 14245 / SRS30216)).